The chain runs to 323 residues: Protoheme IX farnesyltransferase (323 aa).

A run of 9 helical transmembrane segments spans residues 28 to 48 (IIPL…NGQV), 50 to 70 (PVLL…AQTL), 99 to 119 (HALI…VVFV), 122 to 142 (ASAL…THML), 150 to 170 (IVIG…AVTG), 178 to 198 (ALFA…ALMI), 223 to 243 (IWIY…PLAA), 244 to 264 (SGIV…YKTW), and 279 to 299 (LFKY…VDSL).

The protein belongs to the UbiA prenyltransferase family. Protoheme IX farnesyltransferase subfamily.

The protein localises to the cell inner membrane. The enzyme catalyses heme b + (2E,6E)-farnesyl diphosphate + H2O = Fe(II)-heme o + diphosphate. It functions in the pathway porphyrin-containing compound metabolism; heme O biosynthesis; heme O from protoheme: step 1/1. Converts heme B (protoheme IX) to heme O by substitution of the vinyl group on carbon 2 of heme B porphyrin ring with a hydroxyethyl farnesyl side group. The polypeptide is Protoheme IX farnesyltransferase (Gloeothece citriformis (strain PCC 7424) (Cyanothece sp. (strain PCC 7424))).